Consider the following 496-residue polypeptide: Lysine--tRNA ligase (496 aa).

Mg(2+)-binding residues include Glu-408 and Glu-415.

This sequence belongs to the class-II aminoacyl-tRNA synthetase family. In terms of assembly, homodimer. The cofactor is Mg(2+).

The protein resides in the cytoplasm. It catalyses the reaction tRNA(Lys) + L-lysine + ATP = L-lysyl-tRNA(Lys) + AMP + diphosphate. The chain is Lysine--tRNA ligase from Legionella pneumophila (strain Paris).